A 173-amino-acid polypeptide reads, in one-letter code: Putative pre-16S rRNA nuclease (173 aa).

This sequence belongs to the YqgF nuclease family.

It is found in the cytoplasm. Could be a nuclease involved in processing of the 5'-end of pre-16S rRNA. This is Putative pre-16S rRNA nuclease from Psychrobacter cryohalolentis (strain ATCC BAA-1226 / DSM 17306 / VKM B-2378 / K5).